A 449-amino-acid chain; its full sequence is MDMHPWLPNIKYIEEMLKSIGVNSIDDLFIDVPEEIKLKKELDLDYKKPLSEYEIILKLQELQNKNKRLKMPPFLGGGLCPHYVPEVVKFIIKRSEFYTAYTPYQPEISQGLLQALFEYQSLIAELFEMEVVNASLYDWGSALAEAIMMANRINKKKTVLVPKLMNPYHKEVVKTWTYGKGIKLVEIPPNERGTIDVSKLESMINEDDVSAIYIQQPNFYGIFEDEIEYIVDIAKKKKIITIMGVSPLALGLIKPPGEYEIDITVGDGQELGLSLNFGGPLLGILATRWDGQLVRQMPGRIVGLTKDSEGKRGFTLILQTREQFARREKATSNITTNEALMAIAAAVYLSLLGRNGIKELAKEIYIRSHYAKKRLEELGVNTVYNGDFFEEFAVDFRTDYDIIHSRLLEKNIHGGLKLGKTQALFCVTEVHTKSMIDELIESIREVFSG.

It belongs to the GcvP family. N-terminal subunit subfamily. In terms of assembly, the glycine cleavage system is composed of four proteins: P, T, L and H. In this organism, the P 'protein' is a heterodimer of two subunits.

It catalyses the reaction N(6)-[(R)-lipoyl]-L-lysyl-[glycine-cleavage complex H protein] + glycine + H(+) = N(6)-[(R)-S(8)-aminomethyldihydrolipoyl]-L-lysyl-[glycine-cleavage complex H protein] + CO2. In terms of biological role, the glycine cleavage system catalyzes the degradation of glycine. The P protein binds the alpha-amino group of glycine through its pyridoxal phosphate cofactor; CO(2) is released and the remaining methylamine moiety is then transferred to the lipoamide cofactor of the H protein. The polypeptide is Probable glycine dehydrogenase (decarboxylating) subunit 1 (Sulfurisphaera tokodaii (strain DSM 16993 / JCM 10545 / NBRC 100140 / 7) (Sulfolobus tokodaii)).